The primary structure comprises 535 residues: Beta-glucosidase 47 (535 aa).

The first 38 residues, 1–38 (MKKSIVYEIMETKSSMYLSQFRLWLCFIITTLVSLSSS), serve as a signal peptide directing secretion. An a beta-D-glucoside-binding site is contributed by glutamine 73. A glycan (N-linked (GlcNAc...) asparagine) is linked at asparagine 93. A beta-D-glucoside contacts are provided by residues histidine 175 and 220–221 (NE). Glutamate 221 functions as the Proton donor in the catalytic mechanism. Cysteine 240 and cysteine 247 form a disulfide bridge. Residue asparagine 246 is glycosylated (N-linked (GlcNAc...) asparagine). Residue tyrosine 363 participates in a beta-D-glucoside binding. A disulfide bridge connects residues cysteine 371 and cysteine 376. An N-linked (GlcNAc...) asparagine glycan is attached at asparagine 419. An a beta-D-glucoside-binding site is contributed by glutamate 426. The Nucleophile role is filled by glutamate 426. An N-linked (GlcNAc...) asparagine glycan is attached at asparagine 432. Residues tryptophan 470, 477–478 (EW), and phenylalanine 486 contribute to the a beta-D-glucoside site.

This sequence belongs to the glycosyl hydrolase 1 family.

It catalyses the reaction Hydrolysis of terminal, non-reducing beta-D-glucosyl residues with release of beta-D-glucose.. The polypeptide is Beta-glucosidase 47 (Arabidopsis thaliana (Mouse-ear cress)).